Here is a 61-residue protein sequence, read N- to C-terminus: Small ribosomal subunit protein uS14 (61 aa).

Residues cysteine 24, cysteine 27, cysteine 40, and cysteine 43 each contribute to the Zn(2+) site.

This sequence belongs to the universal ribosomal protein uS14 family. Zinc-binding uS14 subfamily. Part of the 30S ribosomal subunit. Contacts proteins S3 and S10. Zn(2+) serves as cofactor.

In terms of biological role, binds 16S rRNA, required for the assembly of 30S particles and may also be responsible for determining the conformation of the 16S rRNA at the A site. In Campylobacter hominis (strain ATCC BAA-381 / DSM 21671 / CCUG 45161 / LMG 19568 / NCTC 13146 / CH001A), this protein is Small ribosomal subunit protein uS14.